The primary structure comprises 104 residues: Phosphoribosyl-ATP pyrophosphatase (104 aa).

The protein belongs to the PRA-PH family.

It localises to the cytoplasm. The enzyme catalyses 1-(5-phospho-beta-D-ribosyl)-ATP + H2O = 1-(5-phospho-beta-D-ribosyl)-5'-AMP + diphosphate + H(+). It participates in amino-acid biosynthesis; L-histidine biosynthesis; L-histidine from 5-phospho-alpha-D-ribose 1-diphosphate: step 2/9. This Erythrobacter litoralis (strain HTCC2594) protein is Phosphoribosyl-ATP pyrophosphatase.